A 251-amino-acid polypeptide reads, in one-letter code: Enolase-phosphatase E1 (251 aa).

Mg(2+) contacts are provided by Asp-13 and Glu-15. Substrate contacts are provided by residues 137–138 (SS) and Lys-183. Asp-210 is a binding site for Mg(2+).

This sequence belongs to the HAD-like hydrolase superfamily. MasA/MtnC family. As to quaternary structure, monomer. Mg(2+) serves as cofactor.

The protein resides in the cytoplasm. It localises to the nucleus. It catalyses the reaction 5-methylsulfanyl-2,3-dioxopentyl phosphate + H2O = 1,2-dihydroxy-5-(methylsulfanyl)pent-1-en-3-one + phosphate. It functions in the pathway amino-acid biosynthesis; L-methionine biosynthesis via salvage pathway; L-methionine from S-methyl-5-thio-alpha-D-ribose 1-phosphate: step 3/6. The protein operates within amino-acid biosynthesis; L-methionine biosynthesis via salvage pathway; L-methionine from S-methyl-5-thio-alpha-D-ribose 1-phosphate: step 4/6. Its function is as follows. Bifunctional enzyme that catalyzes the enolization of 2,3-diketo-5-methylthiopentyl-1-phosphate (DK-MTP-1-P) into the intermediate 2-hydroxy-3-keto-5-methylthiopentenyl-1-phosphate (HK-MTPenyl-1-P), which is then dephosphorylated to form the acireductone 1,2-dihydroxy-3-keto-5-methylthiopentene (DHK-MTPene). This Candida glabrata (strain ATCC 2001 / BCRC 20586 / JCM 3761 / NBRC 0622 / NRRL Y-65 / CBS 138) (Yeast) protein is Enolase-phosphatase E1.